The sequence spans 93 residues: Parbolysin P1 (93 aa).

Cystine bridges form between Cys16–Cys37, Cys22–Cys33, and Cys47–Cys60.

Belongs to the worm cytolysin family. In terms of tissue distribution, localized within the skin and proboscis and are most readily isolated from body mucus secretions.

The protein localises to the secreted. Cytolysin that shows hemolytic activity (on bovine erythrocytes, HC(50)=5.75 mg/ml). This hemolytic activity is completely inhibited by small unilamelar vesicles composed of PC/PG, PC/PI and PC/PS in 1:1 molar ratios (with at least 100 mg/ml concentration). The recombinant protein does not show hemolytic activity, suggesting that it is not properly folded or that it requires a free N-terminal end for its activity. The protein is Parbolysin P1 of Parborlasia corrugatus (Antarctic nemertean worm).